Here is a 510-residue protein sequence, read N- to C-terminus: uncharacterized protein (510 aa).

Over 1-89 (MTSSLDDIEP…QGQRKKVLLK (89 aa)) the chain is Lumenal. The interval 38-76 (AVSQGVPDMDGQTTDSSKDPEPNSEDKKAFPPSSGSFFS) is disordered. Residues 53–66 (SSKDPEPNSEDKKA) are compositionally biased toward basic and acidic residues. A compositionally biased stretch (low complexity) spans 67-76 (FPPSSGSFFS). A helical transmembrane segment spans residues 90 to 110 (FVFTNCLLAIICFTMFVLFWG). At 111 to 123 (ALYDTSKYLHKVK) the chain is on the cytoplasmic side. The chain crosses the membrane as a helical span at residues 124-144 (LLVVIQEPPVVILDNNSSMVV). At 145–312 (PSISYALPTF…TDRILLAPTQ (168 aa)) the chain is on the lumenal side. Residues 313–333 (IGVVYCLLLTFFQFLLYGPLH) form a helical membrane-spanning segment. The Cytoplasmic segment spans residues 334–349 (VEMAKVLRPANGLIYR). The helical transmembrane segment at 350 to 370 (IAMSWFTFFFASLFFCTTTAI) threads the bilayer. Over 371–381 (FQVDFTKSFGR) the chain is Lumenal. A helical membrane pass occupies residues 382 to 402 (GGFVVYWMSTWLFMLAAGGAN). The Cytoplasmic portion of the chain corresponds to 403–416 (ENAVMLVITLGPQY). The chain crosses the membrane as a helical span at residues 417–437 (LGFWILSFVILNIAPSFFPLA). The Lumenal segment spans residues 438 to 474 (LNNNVYRYGYMMPVHNVIDIYRVIFFDVTRRKMGRNY). A helical membrane pass occupies residues 475 to 495 (GILVALIALNTALLPFVGKYA). Topologically, residues 496–510 (SRKLKQKALVAAKQS) are cytoplasmic.

The protein to yeast SNG1.

It is found in the endoplasmic reticulum membrane. This is an uncharacterized protein from Saccharomyces cerevisiae (strain ATCC 204508 / S288c) (Baker's yeast).